The following is a 102-amino-acid chain: Small ribosomal subunit protein uS10 (102 aa).

Belongs to the universal ribosomal protein uS10 family. In terms of assembly, part of the 30S ribosomal subunit.

Its function is as follows. Involved in the binding of tRNA to the ribosomes. In Rhodospirillum rubrum (strain ATCC 11170 / ATH 1.1.1 / DSM 467 / LMG 4362 / NCIMB 8255 / S1), this protein is Small ribosomal subunit protein uS10.